A 499-amino-acid chain; its full sequence is L-asparagine permease (499 aa).

12 helical membrane passes run 34–54 (QVQM…GAGA), 58–78 (MAGP…FFIL), 109–129 (VAGW…ITAV), 146–166 (VFAL…VKWF), 171–191 (FWFA…GTVF), 219–239 (LLPA…IEMV), 264–284 (IGLF…WSAY), 298–318 (LGVP…ALSS), 353–373 (YAGI…NYLV), 378–398 (FEIV…FIIV), 422–442 (APFT…LMAF), and 448–468 (TYTI…WFGV).

Belongs to the amino acid-polyamine-organocation (APC) superfamily. Amino acid transporter (AAT) (TC 2.A.3.1) family.

Its subcellular location is the cell inner membrane. This chain is L-asparagine permease (ansP), found in Escherichia coli (strain K12).